Here is an 84-residue protein sequence, read N- to C-terminus: MLAWVIIVSIITAGLSVALVGMNATKAQGNAAASALESVARQPEAGDQINRMLLFALAFIETIMIFTLTVALILLFANPLLGKL.

2 helical membrane passes run 1-21 (MLAW…ALVG) and 53-73 (LLFA…VALI).

The protein belongs to the ATPase C chain family. In terms of assembly, F-type ATPases have 2 components, F(1) - the catalytic core - and F(0) - the membrane proton channel. F(1) has five subunits: alpha(3), beta(3), gamma(1), delta(1), epsilon(1). F(0) has three main subunits: a(1), b(2) and c(10-14). The alpha and beta chains form an alternating ring which encloses part of the gamma chain. F(1) is attached to F(0) by a central stalk formed by the gamma and epsilon chains, while a peripheral stalk is formed by the delta and b chains.

It is found in the cell inner membrane. In terms of biological role, f(1)F(0) ATP synthase produces ATP from ADP in the presence of a proton or sodium gradient. F-type ATPases consist of two structural domains, F(1) containing the extramembraneous catalytic core and F(0) containing the membrane proton channel, linked together by a central stalk and a peripheral stalk. During catalysis, ATP synthesis in the catalytic domain of F(1) is coupled via a rotary mechanism of the central stalk subunits to proton translocation. Key component of the F(0) channel; it plays a direct role in translocation across the membrane. A homomeric c-ring of between 10-14 subunits forms the central stalk rotor element with the F(1) delta and epsilon subunits. The chain is ATP synthase subunit c from Dictyoglomus thermophilum (strain ATCC 35947 / DSM 3960 / H-6-12).